The primary structure comprises 20 residues: Trypsin inhibitor DE-3 (20 aa).

It belongs to the protease inhibitor I3 (leguminous Kunitz-type inhibitor) family.

Inhibition of trypsin. This Erythrina corallodendron (Coral tree) protein is Trypsin inhibitor DE-3.